Consider the following 159-residue polypeptide: ATP synthase subunit delta, mitochondrial (159 aa).

Residues 1 to 23 constitute a mitochondrion transit peptide; that stretch reads MFRLSAARTLAKSVNTVVAKRTY.

This sequence belongs to the ATPase epsilon chain family. In terms of assembly, F-type ATPases have 2 components, CF(1) - the catalytic core - and CF(0) - the membrane proton channel. CF(1) has five subunits: alpha(3), beta(3), gamma(1), delta(1), epsilon(1). CF(0) has three main subunits: a, b and c.

The protein resides in the mitochondrion. It localises to the mitochondrion inner membrane. Functionally, mitochondrial membrane ATP synthase (F(1)F(0) ATP synthase or Complex V) produces ATP from ADP in the presence of a proton gradient across the membrane which is generated by electron transport complexes of the respiratory chain. F-type ATPases consist of two structural domains, F(1) - containing the extramembraneous catalytic core, and F(0) - containing the membrane proton channel, linked together by a central stalk and a peripheral stalk. During catalysis, ATP turnover in the catalytic domain of F(1) is coupled via a rotary mechanism of the central stalk subunits to proton translocation. Part of the complex F(1) domain and of the central stalk which is part of the complex rotary element. Rotation of the central stalk against the surrounding alpha(3)beta(3) subunits leads to hydrolysis of ATP in three separate catalytic sites on the beta subunits. The chain is ATP synthase subunit delta, mitochondrial (ATP16) from Kluyveromyces lactis (strain ATCC 8585 / CBS 2359 / DSM 70799 / NBRC 1267 / NRRL Y-1140 / WM37) (Yeast).